A 239-amino-acid chain; its full sequence is Orotidine 5'-phosphate decarboxylase (239 aa).

Substrate is bound by residues Asp-10, Lys-33, 60–69, Thr-124, Arg-186, Gln-195, Gly-215, and Arg-216; that span reads DLKLYDIPNT. The active-site Proton donor is Lys-62.

Belongs to the OMP decarboxylase family. Type 1 subfamily. In terms of assembly, homodimer.

It catalyses the reaction orotidine 5'-phosphate + H(+) = UMP + CO2. Its pathway is pyrimidine metabolism; UMP biosynthesis via de novo pathway; UMP from orotate: step 2/2. In terms of biological role, catalyzes the decarboxylation of orotidine 5'-monophosphate (OMP) to uridine 5'-monophosphate (UMP). The sequence is that of Orotidine 5'-phosphate decarboxylase from Latilactobacillus sakei subsp. sakei (strain 23K) (Lactobacillus sakei subsp. sakei).